The chain runs to 75 residues: Putative membrane protein insertion efficiency factor (75 aa).

The protein belongs to the UPF0161 family.

It is found in the cell inner membrane. In terms of biological role, could be involved in insertion of integral membrane proteins into the membrane. The chain is Putative membrane protein insertion efficiency factor from Leptospira biflexa serovar Patoc (strain Patoc 1 / ATCC 23582 / Paris).